The chain runs to 328 residues: MSEKIYEYKDENNWFIGKMTGHNLISGWGVKHRTIKKIDDLLDGIAATLDWENPKGYDVSVVRYQSPLSLITFIIDMINQETQREIKVIPHAGTILLMENAKLLAVYLPEGGVSTATFFATSEQGFGDTILIATRNEGKTKEFRNLFGQLGYRVENLNDYPELPEVAETGTTFEENARLKAETISHLTGKMVLADDSGLKVDALGDLPGVWSARFSGPDATDAKNNAKLLHELAMVFDQKKRSAQFHTTLVVAAPNKDSLVVEAEWPGYIATQPKGENGFGYDPVFIVGETGRHAAELEADQKNQLSHRGQAVRKLMEVFPAWQAKQS.

Residues 1-129 form a unknown region; the sequence is MSEKIYEYKD…ATSEQGFGDT (129 aa). The interval 130-324 is NTP pyrophosphatase; it reads ILIATRNEGK…KLMEVFPAWQ (195 aa). Residue 134–139 participates in substrate binding; sequence TRNEGK. The Proton acceptor role is filled by Asp-196. Asp-196 lines the Mg(2+) pocket. Substrate is bound by residues Ser-197, 280 to 283, Lys-303, and 308 to 309; these read FGYD and HR.

It belongs to the HAM1 NTPase family. As to quaternary structure, homodimer. It depends on Mg(2+) as a cofactor.

It catalyses the reaction XTP + H2O = XMP + diphosphate + H(+). It carries out the reaction dITP + H2O = dIMP + diphosphate + H(+). The enzyme catalyses ITP + H2O = IMP + diphosphate + H(+). Its function is as follows. Pyrophosphatase that catalyzes the hydrolysis of nucleoside triphosphates to their monophosphate derivatives, with a high preference for the non-canonical purine nucleotides XTP (xanthosine triphosphate), dITP (deoxyinosine triphosphate) and ITP. Seems to function as a house-cleaning enzyme that removes non-canonical purine nucleotides from the nucleotide pool, thus preventing their incorporation into DNA/RNA and avoiding chromosomal lesions. This is dITP/XTP pyrophosphatase from Streptococcus pyogenes serotype M6 (strain ATCC BAA-946 / MGAS10394).